We begin with the raw amino-acid sequence, 166 residues long: Phospholipase A2 inhibitor clone 05 (166 aa).

An N-terminal signal peptide occupies residues 1-19 (MRLILLSSLLLLGIFLADG). The region spanning 46–161 (LKGAFLTVHR…CDDNLLVVCE (116 aa)) is the C-type lectin domain. Cystine bridges form between Cys-83-Cys-160 and Cys-138-Cys-152. An N-linked (GlcNAc...) asparagine glycan is attached at Asn-122.

Belongs to the alpha-type phospholipase A2 inhibitor family. Homotrimer; non-covalently linked. Expressed by the liver.

Its subcellular location is the secreted. Its function is as follows. This phospholipase A2 inhibitor binds directly phospholipase A2 in the presence or absence of calcium. This chain is Phospholipase A2 inhibitor clone 05, found in Bothrops moojeni (Lance-headed viper).